The chain runs to 125 residues: Histone H2A (125 aa).

Basic residues predominate over residues 1 to 18 (MSGRGKGGKAKAKAKSRS). Residues 1-21 (MSGRGKGGKAKAKAKSRSSRA) are disordered. Position 2 is an N-acetylserine (serine 2). Glutamine 104 is subject to N5-methylglutamine.

Belongs to the histone H2A family. As to quaternary structure, the nucleosome is a histone octamer containing two molecules each of H2A, H2B, H3 and H4 assembled in one H3-H4 heterotetramer and two H2A-H2B heterodimers. The octamer wraps approximately 147 bp of DNA.

It localises to the nucleus. It is found in the chromosome. Functionally, core component of nucleosome. Nucleosomes wrap and compact DNA into chromatin, limiting DNA accessibility to the cellular machineries which require DNA as a template. Histones thereby play a central role in transcription regulation, DNA repair, DNA replication and chromosomal stability. DNA accessibility is regulated via a complex set of post-translational modifications of histones, also called histone code, and nucleosome remodeling. The chain is Histone H2A from Mytilus californianus (California mussel).